The following is a 247-amino-acid chain: Carboxy-S-adenosyl-L-methionine synthase (247 aa).

Residues Tyr-40, 65–67 (GAS), 90–91 (DN), 122–123 (DI), Asn-137, and Arg-204 contribute to the S-adenosyl-L-methionine site.

It belongs to the class I-like SAM-binding methyltransferase superfamily. Cx-SAM synthase family. Homodimer.

The enzyme catalyses prephenate + S-adenosyl-L-methionine = carboxy-S-adenosyl-L-methionine + 3-phenylpyruvate + H2O. In terms of biological role, catalyzes the conversion of S-adenosyl-L-methionine (SAM) to carboxy-S-adenosyl-L-methionine (Cx-SAM). In Pseudomonas putida (strain ATCC 700007 / DSM 6899 / JCM 31910 / BCRC 17059 / LMG 24140 / F1), this protein is Carboxy-S-adenosyl-L-methionine synthase.